We begin with the raw amino-acid sequence, 130 residues long: MAATQYYGTGRRKTSTARVFAKVGSGNIIVNKRPLDVYFGRETARMVVRQPLELVEMTEKLDIYVTVKGGGITGQAGAIRHGITRALMELDESLRPTLRAAGFVTRDARQVERKKVGLRKARRRPQFSKR.

It belongs to the universal ribosomal protein uS9 family.

In Shewanella amazonensis (strain ATCC BAA-1098 / SB2B), this protein is Small ribosomal subunit protein uS9.